The chain runs to 51 residues: Insulin-1 (51 aa).

3 disulfides stabilise this stretch: Cys-8-Cys-37, Cys-20-Cys-50, and Cys-36-Cys-41.

Belongs to the insulin family. In terms of assembly, heterodimer of a B chain and an A chain linked by two disulfide bonds.

It is found in the secreted. Functionally, insulin decreases blood glucose concentration. It increases cell permeability to monosaccharides, amino acids and fatty acids. It accelerates glycolysis, the pentose phosphate cycle, and glycogen synthesis in liver. This is Insulin-1 (ins1) from Batrachoididae sp. (Toadfish).